Here is a 210-residue protein sequence, read N- to C-terminus: Large ribosomal subunit protein uL22 (210 aa).

Positions 123–210 (NEMTSKETVK…TKSTKKEGSK (88 aa)) are disordered. Over residues 126-157 (TSKETVKEPAKKPSAKVEKPAEAKAPKQETST) the composition is skewed to basic and acidic residues. Positions 158 to 185 (KKPTTTTESKPKTSKAPAQKQAAKVAKP) are enriched in low complexity.

It belongs to the universal ribosomal protein uL22 family. In terms of assembly, part of the 50S ribosomal subunit.

In terms of biological role, this protein binds specifically to 23S rRNA; its binding is stimulated by other ribosomal proteins, e.g. L4, L17, and L20. It is important during the early stages of 50S assembly. It makes multiple contacts with different domains of the 23S rRNA in the assembled 50S subunit and ribosome. The globular domain of the protein is located near the polypeptide exit tunnel on the outside of the subunit, while an extended beta-hairpin is found that lines the wall of the exit tunnel in the center of the 70S ribosome. The sequence is that of Large ribosomal subunit protein uL22 from Metamycoplasma arthritidis (strain 158L3-1) (Mycoplasma arthritidis).